Consider the following 329-residue polypeptide: Ribosomal RNA small subunit methyltransferase C (329 aa).

This sequence belongs to the methyltransferase superfamily. RsmC family. As to quaternary structure, monomer.

Its subcellular location is the cytoplasm. It carries out the reaction guanosine(1207) in 16S rRNA + S-adenosyl-L-methionine = N(2)-methylguanosine(1207) in 16S rRNA + S-adenosyl-L-homocysteine + H(+). In terms of biological role, specifically methylates the guanine in position 1207 of 16S rRNA in the 30S particle. The protein is Ribosomal RNA small subunit methyltransferase C of Actinobacillus pleuropneumoniae serotype 5b (strain L20).